Here is a 206-residue protein sequence, read N- to C-terminus: MELKLLNEQGQPASTLDASDVLFAREYNEALVHQVVTAYLANARSGNRAQKGRSEIAKSTRKPFRQKGTGNARAGMASSPLWRGGGKIFPNSPDENFSQKVNRKMYRAGVAAILSQLAREDRLAVVDNFSVEAPKTRLLAEKLKGMGLDSVLVITDGLDENLFLSSRNLHKVLVLDVHETDPVSLVRFPKVLVTKGALAKMEEAWQ.

The interval 47–94 (NRAQKGRSEIAKSTRKPFRQKGTGNARAGMASSPLWRGGGKIFPNSPD) is disordered.

This sequence belongs to the universal ribosomal protein uL4 family. In terms of assembly, part of the 50S ribosomal subunit.

Functionally, one of the primary rRNA binding proteins, this protein initially binds near the 5'-end of the 23S rRNA. It is important during the early stages of 50S assembly. It makes multiple contacts with different domains of the 23S rRNA in the assembled 50S subunit and ribosome. Its function is as follows. Forms part of the polypeptide exit tunnel. This chain is Large ribosomal subunit protein uL4, found in Azoarcus sp. (strain BH72).